A 937-amino-acid polypeptide reads, in one-letter code: Periplasmic nitrate reductase (937 aa).

Positions 1–31 (MSMNRREFLKTTAAAAAASAVGISIPSEAKA) form a signal peptide, tat-type signal. Residues 40 to 96 (WQWDKAVCRFCGTGCGIMVAVKDDKIVAVKGDPESPVNRGINCIKGYFNAKIMYGAD) enclose the 4Fe-4S Mo/W bis-MGD-type domain. 4 residues coordinate [4Fe-4S] cluster: cysteine 47, cysteine 50, cysteine 54, and cysteine 82. Residues lysine 84, glutamine 152, asparagine 177, cysteine 181, 214–221 (WGANMAEM), methionine 422, glutamine 426, asparagine 532, lysine 580, aspartate 607, and 827–836 (TGRVLEHWHS) each bind Mo-bis(molybdopterin guanine dinucleotide). Residue tryptophan 903 coordinates substrate. Residues asparagine 911 and lysine 928 each contribute to the Mo-bis(molybdopterin guanine dinucleotide) site.

The protein belongs to the prokaryotic molybdopterin-containing oxidoreductase family. NasA/NapA/NarB subfamily. Component of the periplasmic nitrate reductase NapAB complex composed of NapA and NapB. The cofactor is [4Fe-4S] cluster. Requires Mo-bis(molybdopterin guanine dinucleotide) as cofactor. Post-translationally, predicted to be exported by the Tat system. The position of the signal peptide cleavage has not been experimentally proven.

The protein resides in the periplasm. The enzyme catalyses 2 Fe(II)-[cytochrome] + nitrate + 2 H(+) = 2 Fe(III)-[cytochrome] + nitrite + H2O. Catalytic subunit of the periplasmic nitrate reductase complex NapAB. Receives electrons from NapB and catalyzes the reduction of nitrate to nitrite. The chain is Periplasmic nitrate reductase from Nautilia profundicola (strain ATCC BAA-1463 / DSM 18972 / AmH).